The sequence spans 354 residues: Magnesium-chelatase subunit ChlI (354 aa).

G47 to S54 contacts ATP. An intrachain disulfide couples C282 to C324.

This sequence belongs to the Mg-chelatase subunits D/I family. The magnesium chelatase complex is a heterotrimer consisting of subunits CHLI, CHLD and CHLH.

The protein resides in the plastid. It localises to the chloroplast. The enzyme catalyses protoporphyrin IX + Mg(2+) + ATP + H2O = Mg-protoporphyrin IX + ADP + phosphate + 3 H(+). It participates in porphyrin-containing compound metabolism; chlorophyll biosynthesis. With respect to regulation, redox regulation; active in reducing conditions, inactive in oxidizing conditions. Thioredoxins f and m mediate the reversible reductive activation of oxidized CHLI. Its function is as follows. Involved in chlorophyll biosynthesis. Catalyzes the insertion of magnesium ion into protoporphyrin IX to yield Mg-protoporphyrin IX. The magnesium-chelatase is a complex of three subunits, CHLI, CHLD and CHLH. The reaction takes place in two steps, with an ATP-dependent activation followed by an ATP-dependent chelation step. This Chlorella vulgaris (Green alga) protein is Magnesium-chelatase subunit ChlI (chlI).